The primary structure comprises 243 residues: Type III pantothenate kinase (243 aa).

ATP is bound at residue 7–14 (DIGNTRLK). Substrate contacts are provided by residues Tyr95 and 102–105 (GIDR). Residue Asp104 is the Proton acceptor of the active site. Thr126 provides a ligand contact to ATP. A substrate-binding site is contributed by Thr177.

The protein belongs to the type III pantothenate kinase family. As to quaternary structure, homodimer. The cofactor is NH4(+). It depends on K(+) as a cofactor.

It localises to the cytoplasm. The enzyme catalyses (R)-pantothenate + ATP = (R)-4'-phosphopantothenate + ADP + H(+). The protein operates within cofactor biosynthesis; coenzyme A biosynthesis; CoA from (R)-pantothenate: step 1/5. Functionally, catalyzes the phosphorylation of pantothenate (Pan), the first step in CoA biosynthesis. The sequence is that of Type III pantothenate kinase from Acinetobacter baylyi (strain ATCC 33305 / BD413 / ADP1).